Consider the following 175-residue polypeptide: Protein SELF-PRUNING (175 aa).

It belongs to the phosphatidylethanolamine-binding protein family.

The protein resides in the cytoplasm. In terms of biological role, not known. In plants homozygous for the recessive allele of the SP gene, sympodial segments develop progressively fewer nodes until the shoot is terminated by two consecutive. inflorescences. This chain is Protein SELF-PRUNING (SP), found in Solanum lycopersicum (Tomato).